The following is a 176-amino-acid chain: Inner membrane-spanning protein YciB (176 aa).

The next 5 helical transmembrane spans lie at 23-43 (MIAATAVALVAGVVQAAFLYW), 50-70 (TMQWVGLVLIVVFGGATIVLG), 74-94 (FIMWKPSVLFWLGALFLWGSH), 119-139 (LTYMWVGFLIFMGIANWFVFT), and 150-170 (MFGSTALMLVFFIIQGIYLST).

The protein belongs to the YciB family.

The protein resides in the cell inner membrane. Its function is as follows. Plays a role in cell envelope biogenesis, maintenance of cell envelope integrity and membrane homeostasis. The sequence is that of Inner membrane-spanning protein YciB from Neisseria meningitidis serogroup A / serotype 4A (strain DSM 15465 / Z2491).